A 256-amino-acid polypeptide reads, in one-letter code: MGTDVWVGSWRPHRPRGPIAALYSSPGPKYSLPGNTGFVSHDPSRYRAPAYSMGNRRFKFVDDCSPGPGYLVPSNITVKGKDGTPAYSIYGRPKDISSFRTPGPGSYSPERAGKSAYRSAPTYSLGERTKTFSNDQTPGPAAYVLPSVIGPRIVNRISAPNYSMTGRSKIGSFHEDLQRTPGPGTYRVIDPGSYKHRPPQYSMTARNVLPGDTTIKPGPGAYSPEKVVMSRPQAPNFSFGIRHSDYVAPLIVDVAD.

3 STPGR repeats span residues 66 to 92, 181 to 206, and 217 to 242; these read PGPG…IYGR, PGPG…MTAR, and PGPG…FGIR.

This sequence belongs to the CIMAP family.

It is found in the cytoplasm. It localises to the cytoskeleton. The protein localises to the flagellum axoneme. Outer dense fibers are filamentous structures located on the outside of the axoneme in the midpiece and principal piece of the mammalian sperm tail. May help to maintain the passive elastic structures and elastic recoil of the sperm tail. The protein is Ciliary microtubule associated protein 1A (cimap1a) of Xenopus tropicalis (Western clawed frog).